Here is a 938-residue protein sequence, read N- to C-terminus: Isoleucine--tRNA ligase (938 aa).

The 'HIGH' region motif lies at 58 to 68; it reads PYANGSIHIGH. Lys-183 carries the N6-acetyllysine modification. Glu-561 provides a ligand contact to L-isoleucyl-5'-AMP. The 'KMSKS' region signature appears at 602–606; sequence KMSKS. An ATP-binding site is contributed by Lys-605. Zn(2+) is bound by residues Cys-901, Cys-904, Cys-921, and Cys-924.

This sequence belongs to the class-I aminoacyl-tRNA synthetase family. IleS type 1 subfamily. In terms of assembly, monomer. Zn(2+) serves as cofactor.

It is found in the cytoplasm. The catalysed reaction is tRNA(Ile) + L-isoleucine + ATP = L-isoleucyl-tRNA(Ile) + AMP + diphosphate. In terms of biological role, catalyzes the attachment of isoleucine to tRNA(Ile). As IleRS can inadvertently accommodate and process structurally similar amino acids such as valine, to avoid such errors it has two additional distinct tRNA(Ile)-dependent editing activities. One activity is designated as 'pretransfer' editing and involves the hydrolysis of activated Val-AMP. The other activity is designated 'posttransfer' editing and involves deacylation of mischarged Val-tRNA(Ile). The chain is Isoleucine--tRNA ligase from Escherichia coli O9:H4 (strain HS).